Reading from the N-terminus, the 608-residue chain is Epsin-3 (608 aa).

6 residues coordinate a 1,2-diacyl-sn-glycero-3-phospho-(1D-myo-inositol-4,5-bisphosphate): Arg8, Lys11, Arg25, Asn30, Arg63, and His73. In terms of domain architecture, ENTH spans 12–144 (NIVHNYSEAE…KDEERLRQER (133 aa)). 2 disordered regions span residues 150–266 (TKER…QSSI) and 281–475 (STHC…GPSA). The span at 174–189 (GSPSSYTSASSSPRYA) shows a compositional bias: low complexity. A phosphoserine mark is found at Ser184 and Ser185. Positions 202 to 221 (EEELQLQLALAMSREEAEKG) constitute a UIM domain. Composition is skewed to basic and acidic residues over residues 214–229 (SREE…KGDD) and 240–260 (GQRR…EKLK). 7 consecutive repeat copies span residues 287–289 (DPW), 310–312 (DPW), 337–339 (EPW), 353–355 (DPW), 370–372 (DPW), 495–497 (NPF), and 508–510 (NPF). Residues 287–372 (DPWDIPGLRP…KLPSTGVDPW (86 aa)) form a 5 X 3 AA repeats of [DE]-P-W region. A compositionally biased stretch (pro residues) spans 346–363 (PSGPPITDPWAPSSPTPK). A 3 X 3 AA repeats of N-P-F region spans residues 495–607 (NPFLTGLSAP…LPPQAGTNPF (113 aa)). Disordered regions lie at residues 498 to 530 (LTGL…SPAL) and 575 to 608 (GAFA…NPFL). The span at 578–588 (APPPASLPQPL) shows a compositional bias: pro residues. Copy 3 of the repeat occupies 605-607 (NPF).

Belongs to the epsin family.

Its subcellular location is the cytoplasm. The protein localises to the cell cortex. It localises to the perinuclear region. The protein resides in the cytoplasmic vesicle. It is found in the clathrin-coated vesicle. Its subcellular location is the nucleus. This Rattus norvegicus (Rat) protein is Epsin-3 (Epn3).